Consider the following 274-residue polypeptide: Diaminopimelate epimerase (274 aa).

Substrate contacts are provided by asparagine 11 and asparagine 76. The active-site Proton donor is cysteine 85. Residues 86–87 (GN), asparagine 157, asparagine 189, and 207–208 (ER) contribute to the substrate site. The active-site Proton acceptor is the cysteine 216. 217 to 218 (GT) serves as a coordination point for substrate.

It belongs to the diaminopimelate epimerase family. As to quaternary structure, homodimer.

Its subcellular location is the cytoplasm. The enzyme catalyses (2S,6S)-2,6-diaminopimelate = meso-2,6-diaminopimelate. The protein operates within amino-acid biosynthesis; L-lysine biosynthesis via DAP pathway; DL-2,6-diaminopimelate from LL-2,6-diaminopimelate: step 1/1. Functionally, catalyzes the stereoinversion of LL-2,6-diaminopimelate (L,L-DAP) to meso-diaminopimelate (meso-DAP), a precursor of L-lysine and an essential component of the bacterial peptidoglycan. The chain is Diaminopimelate epimerase from Thermobifida fusca (strain YX).